Here is a 237-residue protein sequence, read N- to C-terminus: MALTTWFWVGAVGMLAGTVLPIRDCIRHPSHRRYDLVLAGITGLAAIAYTTMGLGITATTVGDRTVYLARYIDWLVTTPLIVLYLAMLARPGHRTSAWLLAADVFVIAAGIAAALTTGVQRWLFFAVGAAGYAALLYGLLGTLPRALGDDPRVRSLFVTLRNITVVLWTLYPVVWLLSPAGIGILQTEMYTIVVVYLDFISKVAFVAFAVLGADAVSRLVAADAAAPATAEPTPDGD.

The Extracellular portion of the chain corresponds to 1–2 (MA). The helical transmembrane segment at 3–23 (LTTWFWVGAVGMLAGTVLPIR) threads the bilayer. The Cytoplasmic portion of the chain corresponds to 24–31 (DCIRHPSH). A helical transmembrane segment spans residues 32-53 (RRYDLVLAGITGLAAIAYTTMG). Over 54-67 (LGITATTVGDRTVY) the chain is Extracellular. A helical membrane pass occupies residues 68–89 (LARYIDWLVTTPLIVLYLAMLA). Over 90-92 (RPG) the chain is Cytoplasmic. The helical transmembrane segment at 93–115 (HRTSAWLLAADVFVIAAGIAAAL) threads the bilayer. The Extracellular portion of the chain corresponds to 116 to 119 (TTGV). A helical transmembrane segment spans residues 120–147 (QRWLFFAVGAAGYAALLYGLLGTLPRAL). Residues 148 to 150 (GDD) are Cytoplasmic-facing. Residues 151–178 (PRVRSLFVTLRNITVVLWTLYPVVWLLS) traverse the membrane as a helical segment. The Extracellular segment spans residues 179–186 (PAGIGILQ). Residues 187 to 214 (TEMYTIVVVYLDFISKVAFVAFAVLGAD) form a helical membrane-spanning segment. Lysine 202 is subject to N6-(retinylidene)lysine. Residues 215-237 (AVSRLVAADAAAPATAEPTPDGD) lie on the Cytoplasmic side of the membrane.

It belongs to the archaeal/bacterial/fungal opsin family. As to quaternary structure, interacts with HTR-II.

The protein resides in the cell membrane. Photophobic photoreceptor responsible for the negative phototaxis. Activates the sensory rhodopsin II transducer (HTR-II) in response to blue light. The polypeptide is Sensory rhodopsin-2 (sop2) (Halobacterium salinarum (strain ATCC 700922 / JCM 11081 / NRC-1) (Halobacterium halobium)).